A 286-amino-acid chain; its full sequence is Glycine--tRNA ligase alpha subunit (286 aa).

Belongs to the class-II aminoacyl-tRNA synthetase family. Tetramer of two alpha and two beta subunits.

The protein resides in the cytoplasm. It catalyses the reaction tRNA(Gly) + glycine + ATP = glycyl-tRNA(Gly) + AMP + diphosphate. The chain is Glycine--tRNA ligase alpha subunit from Thermotoga sp. (strain RQ2).